Reading from the N-terminus, the 200-residue chain is Large ribosomal subunit protein uL4 (200 aa).

The disordered stretch occupies residues 38–72; it reads GRQGTKQQKTRSDVAGGGKRPWRQKGTGRARAGTT.

The protein belongs to the universal ribosomal protein uL4 family. Part of the 50S ribosomal subunit.

In terms of biological role, one of the primary rRNA binding proteins, this protein initially binds near the 5'-end of the 23S rRNA. It is important during the early stages of 50S assembly. It makes multiple contacts with different domains of the 23S rRNA in the assembled 50S subunit and ribosome. Its function is as follows. Forms part of the polypeptide exit tunnel. In Pseudomonas putida (strain ATCC 700007 / DSM 6899 / JCM 31910 / BCRC 17059 / LMG 24140 / F1), this protein is Large ribosomal subunit protein uL4.